Reading from the N-terminus, the 74-residue chain is Small ribosomal subunit protein bS18 (74 aa).

It belongs to the bacterial ribosomal protein bS18 family. Part of the 30S ribosomal subunit. Forms a tight heterodimer with protein bS6.

Functionally, binds as a heterodimer with protein bS6 to the central domain of the 16S rRNA, where it helps stabilize the platform of the 30S subunit. This is Small ribosomal subunit protein bS18 from Rhizorhabdus wittichii (strain DSM 6014 / CCUG 31198 / JCM 15750 / NBRC 105917 / EY 4224 / RW1) (Sphingomonas wittichii).